Here is a 291-residue protein sequence, read N- to C-terminus: 4-hydroxy-tetrahydrodipicolinate synthase (291 aa).

Residue T45 participates in pyruvate binding. Y131 functions as the Proton donor/acceptor in the catalytic mechanism. K159 serves as the catalytic Schiff-base intermediate with substrate. I202 lines the pyruvate pocket.

This sequence belongs to the DapA family. In terms of assembly, homotetramer; dimer of dimers.

It is found in the cytoplasm. The catalysed reaction is L-aspartate 4-semialdehyde + pyruvate = (2S,4S)-4-hydroxy-2,3,4,5-tetrahydrodipicolinate + H2O + H(+). Its pathway is amino-acid biosynthesis; L-lysine biosynthesis via DAP pathway; (S)-tetrahydrodipicolinate from L-aspartate: step 3/4. Its function is as follows. Catalyzes the condensation of (S)-aspartate-beta-semialdehyde [(S)-ASA] and pyruvate to 4-hydroxy-tetrahydrodipicolinate (HTPA). This chain is 4-hydroxy-tetrahydrodipicolinate synthase, found in Methanosarcina acetivorans (strain ATCC 35395 / DSM 2834 / JCM 12185 / C2A).